Here is a 195-residue protein sequence, read N- to C-terminus: Pyridoxal 5'-phosphate synthase subunit PdxT (195 aa).

Glycine 55 to serine 57 is an L-glutamine binding site. The Nucleophile role is filled by cysteine 84. L-glutamine is bound by residues arginine 111 and isoleucine 139–arginine 140. Catalysis depends on charge relay system residues histidine 175 and glutamate 177.

Belongs to the glutaminase PdxT/SNO family. As to quaternary structure, in the presence of PdxS, forms a dodecamer of heterodimers. Only shows activity in the heterodimer.

It carries out the reaction aldehydo-D-ribose 5-phosphate + D-glyceraldehyde 3-phosphate + L-glutamine = pyridoxal 5'-phosphate + L-glutamate + phosphate + 3 H2O + H(+). The enzyme catalyses L-glutamine + H2O = L-glutamate + NH4(+). It functions in the pathway cofactor biosynthesis; pyridoxal 5'-phosphate biosynthesis. Its function is as follows. Catalyzes the hydrolysis of glutamine to glutamate and ammonia as part of the biosynthesis of pyridoxal 5'-phosphate. The resulting ammonia molecule is channeled to the active site of PdxS. The protein is Pyridoxal 5'-phosphate synthase subunit PdxT of Methanosphaerula palustris (strain ATCC BAA-1556 / DSM 19958 / E1-9c).